The following is a 338-amino-acid chain: Phenylalanine--tRNA ligase alpha subunit (338 aa).

Glu-253 is a binding site for Mg(2+).

It belongs to the class-II aminoacyl-tRNA synthetase family. Phe-tRNA synthetase alpha subunit type 1 subfamily. In terms of assembly, tetramer of two alpha and two beta subunits. Mg(2+) serves as cofactor.

It localises to the cytoplasm. The enzyme catalyses tRNA(Phe) + L-phenylalanine + ATP = L-phenylalanyl-tRNA(Phe) + AMP + diphosphate + H(+). This is Phenylalanine--tRNA ligase alpha subunit from Geobacter metallireducens (strain ATCC 53774 / DSM 7210 / GS-15).